We begin with the raw amino-acid sequence, 326 residues long: Tetraacyldisaccharide 4'-kinase (326 aa).

55–62 is an ATP binding site; it reads TVGGNGKT.

Belongs to the LpxK family.

The catalysed reaction is a lipid A disaccharide + ATP = a lipid IVA + ADP + H(+). It participates in glycolipid biosynthesis; lipid IV(A) biosynthesis; lipid IV(A) from (3R)-3-hydroxytetradecanoyl-[acyl-carrier-protein] and UDP-N-acetyl-alpha-D-glucosamine: step 6/6. Its function is as follows. Transfers the gamma-phosphate of ATP to the 4'-position of a tetraacyldisaccharide 1-phosphate intermediate (termed DS-1-P) to form tetraacyldisaccharide 1,4'-bis-phosphate (lipid IVA). In Tolumonas auensis (strain DSM 9187 / NBRC 110442 / TA 4), this protein is Tetraacyldisaccharide 4'-kinase.